The sequence spans 563 residues: Quinidine resistance protein 1 (563 aa).

The span at methionine 1 to arginine 10 shows a compositional bias: polar residues. The segment at methionine 1 to aspartate 50 is disordered. Over methionine 1–cysteine 75 the chain is Cytoplasmic. A compositionally biased stretch (low complexity) spans aspartate 23–aspartate 33. Residues aspartate 39–isoleucine 49 are compositionally biased toward basic and acidic residues. A helical membrane pass occupies residues alanine 76–isoleucine 96. Over glutamate 97–asparagine 108 the chain is Extracellular. The helical transmembrane segment at valine 109–alanine 129 threads the bilayer. Residues aspartate 130–arginine 135 are Cytoplasmic-facing. The helical transmembrane segment at proline 136–histidine 156 threads the bilayer. Residues asparagine 157–arginine 165 lie on the Extracellular side of the membrane. The helical transmembrane segment at cysteine 166–valine 186 threads the bilayer. The Cytoplasmic portion of the chain corresponds to threonine 187–tyrosine 195. The chain crosses the membrane as a helical span at residues valine 196 to glycine 216. Residues leucine 217–arginine 224 lie on the Extracellular side of the membrane. Residues alanine 225–methionine 245 form a helical membrane-spanning segment. Residues proline 246–aspartate 296 are Cytoplasmic-facing. The helical transmembrane segment at phenylalanine 297 to glycine 317 threads the bilayer. The Extracellular portion of the chain corresponds to leucine 318–serine 341. A helical transmembrane segment spans residues valine 342–serine 362. The Cytoplasmic portion of the chain corresponds to alanine 363–proline 421. The helical transmembrane segment at alanine 422 to valine 442 threads the bilayer. The Extracellular segment spans residues lysine 443 to proline 445. A helical transmembrane segment spans residues leucine 446–phenylalanine 466. Residues serine 467–threonine 481 lie on the Cytoplasmic side of the membrane. A helical membrane pass occupies residues alanine 482–threonine 502. Over lysine 503–glycine 511 the chain is Extracellular. A helical transmembrane segment spans residues glycine 512–leucine 532. At lysine 533–threonine 563 the chain is on the cytoplasmic side.

It belongs to the major facilitator superfamily. CAR1 family.

Its subcellular location is the cell membrane. Its function is as follows. Multidrug resistance transporter involved in resistance and adaptation to quinidine and ketoconazole. The protein is Quinidine resistance protein 1 (QDR1) of Saccharomyces cerevisiae (strain ATCC 204508 / S288c) (Baker's yeast).